The primary structure comprises 108 residues: MLKSNLEVDNRFSLIGKVADFPKRNKSPSGIDHCLFYLEHRSNKKEAGFTRQAWCKIAIQISGNQLIEKTQSITVGQQLLVVGFVTSHRSSNGLNQLILHAEQIEFIE.

One can recognise an SSB domain in the interval 8-108 (VDNRFSLIGK…LHAEQIEFIE (101 aa)).

It belongs to the PriB family. As to quaternary structure, homodimer. Interacts with PriA and DnaT. Component of the replication restart primosome. Primosome assembly occurs via a 'hand-off' mechanism. PriA binds to replication forks, subsequently PriB then DnaT bind; DnaT then displaces ssDNA to generate the helicase loading substrate.

Its function is as follows. Involved in the restart of stalled replication forks, which reloads the replicative helicase on sites other than the origin of replication; the PriA-PriB pathway is the major replication restart pathway. During primosome assembly it facilitates complex formation between PriA and DnaT on DNA; stabilizes PriA on DNA. Stimulates the DNA unwinding activity of PriA helicase. This is Replication restart protein PriB from Histophilus somni (strain 2336) (Haemophilus somnus).